The sequence spans 1131 residues: Probable chloride channel protein UM03490-D (1131 aa).

12 helical membrane-spanning segments follow: residues 137-157 (GVIV…SLAT), 206-226 (VTVT…PILP), 305-325 (FPAW…CAHL), 341-361 (IKCI…TLAI), 380-397 (GPAV…ASFF), 414-434 (SSAA…LFSL), 485-505 (FEIM…AFVI), 518-538 (YLVK…AFVG), 577-597 (MVNS…VSYG), 603-623 (GIFV…GILV), 643-663 (VPCI…LAGV), and 680-702 (ALTY…DWFS). Disordered stretches follow at residues 815–835 (DGVE…LSVA) and 858–928 (ATGA…AGGG). The segment covering 866 to 877 (GLGSTSATGVAS) has biased composition (low complexity). The region spanning 944–1000 (IDPTPLIVQPGMPLETVMDMFKNLGPRVILVVEYGRLSGLVTVKDVLKRIAMQEKAE) is the CBS domain. Residues 1061-1078 (RASASRGGAPGSQAGQAR) are compositionally biased toward low complexity. The interval 1061–1131 (RASASRGGAP…VLGAQDDDDE (71 aa)) is disordered. Positions 1104 to 1113 (STRQTSATKN) are enriched in polar residues.

The protein belongs to the chloride channel (TC 2.A.49) family.

Its subcellular location is the membrane. Functionally, voltage-gated chloride channel. In Mycosarcoma maydis (Corn smut fungus), this protein is Probable chloride channel protein UM03490-D.